Consider the following 360-residue polypeptide: 3-dehydroquinate synthase (360 aa).

Residues 70-75 (DGEKYK), 104-108 (GVIGD), 128-129 (TT), Lys141, and Lys150 contribute to the NAD(+) site. Residues Glu183, His246, and His263 each coordinate Zn(2+).

This sequence belongs to the sugar phosphate cyclases superfamily. Dehydroquinate synthase family. Requires Co(2+) as cofactor. Zn(2+) is required as a cofactor. It depends on NAD(+) as a cofactor.

The protein localises to the cytoplasm. It carries out the reaction 7-phospho-2-dehydro-3-deoxy-D-arabino-heptonate = 3-dehydroquinate + phosphate. Its pathway is metabolic intermediate biosynthesis; chorismate biosynthesis; chorismate from D-erythrose 4-phosphate and phosphoenolpyruvate: step 2/7. Catalyzes the conversion of 3-deoxy-D-arabino-heptulosonate 7-phosphate (DAHP) to dehydroquinate (DHQ). In Acinetobacter baumannii (strain AYE), this protein is 3-dehydroquinate synthase.